The sequence spans 91 residues: Small ribosomal subunit protein uS19 (91 aa).

This sequence belongs to the universal ribosomal protein uS19 family.

Its function is as follows. Protein S19 forms a complex with S13 that binds strongly to the 16S ribosomal RNA. This is Small ribosomal subunit protein uS19 from Sulfurimonas denitrificans (strain ATCC 33889 / DSM 1251) (Thiomicrospira denitrificans (strain ATCC 33889 / DSM 1251)).